The following is a 232-amino-acid chain: MDSDYSFSLTTFSPSGKLVQIEHALQAAASGGSAIGIKAKNGVVLITEKKLHSLVDVTSVQKISMITENIGLVYAGMGPDSRVLIKKARKESEKYYKQYKEKIPVLQLVRELASIMQEFTQSGGVRPFGVSLLVAGFDEKGPHLYQVDPSGSYFAWKATAIGKNMVSSKTFLEKRYSDDLEIEDAIQTALITIKEGFETQLTEFNMELAIIGKNQEFKILTPAQIKDYLLNL.

It belongs to the peptidase T1A family. As to quaternary structure, the 26S proteasome consists of a 20S proteasome core and two 19S regulatory subunits. The 20S proteasome core is composed of 28 subunits that are arranged in four stacked rings, resulting in a barrel-shaped structure. The two end rings are each formed by seven alpha subunits, and the two central rings are each formed by seven beta subunits. The catalytic chamber with the active sites is on the inside of the barrel.

It is found in the cytoplasm. Its subcellular location is the nucleus. Functionally, the proteasome is a multicatalytic proteinase complex which is characterized by its ability to cleave peptides with Arg, Phe, Tyr, Leu, and Glu adjacent to the leaving group at neutral or slightly basic pH. The proteasome has an ATP-dependent proteolytic activity. The sequence is that of Proteasome subunit alpha type-2 (psmA2) from Dictyostelium discoideum (Social amoeba).